A 340-amino-acid polypeptide reads, in one-letter code: GTPase Obg (340 aa).

In terms of domain architecture, Obg spans 1–159 (MGFIDEVKLC…KHVLLKLKVL (159 aa)). Positions 160-329 (SDVGIIGMPN…LSEKLKKSNS (170 aa)) constitute an OBG-type G domain. Residues 166-173 (GMPNAGKS), 191-195 (FTTVR), 212-215 (DIPG), 279-282 (NKCD), and 310-312 (NGD) contribute to the GTP site. Positions 173 and 193 each coordinate Mg(2+).

The protein belongs to the TRAFAC class OBG-HflX-like GTPase superfamily. OBG GTPase family. Monomer. Mg(2+) is required as a cofactor.

Its subcellular location is the cytoplasm. Its function is as follows. An essential GTPase which binds GTP, GDP and possibly (p)ppGpp with moderate affinity, with high nucleotide exchange rates and a fairly low GTP hydrolysis rate. Plays a role in control of the cell cycle, stress response, ribosome biogenesis and in those bacteria that undergo differentiation, in morphogenesis control. This chain is GTPase Obg, found in Wolbachia sp. subsp. Drosophila simulans (strain wRi).